We begin with the raw amino-acid sequence, 259 residues long: Complement factor D (259 aa).

A signal peptide spans 1-21 (MADRSGHLAALILLGAAVCVA). Positions 22–26 (QPRGR) are cleaved as a propeptide — activation peptide. Residues 27–254 (ILGGQEAKSH…YVAWIDGVMA (228 aa)) enclose the Peptidase S1 domain. Cysteine 52 and cysteine 68 are oxidised to a cystine. Residues histidine 67 and aspartate 115 each act as charge relay system in the active site. 3 disulfide bridges follow: cysteine 149/cysteine 215, cysteine 180/cysteine 196, and cysteine 205/cysteine 230. Serine 209 functions as the Charge relay system in the catalytic mechanism. Positions 224 to 228 (TSGSR) are self-inhibitor loop.

This sequence belongs to the peptidase S1 family. CFD is activated by the removal of 5 residues at the N-terminus, named activation peptide, by the MASP-3 isoform of MASP1.

It localises to the secreted. The catalysed reaction is Selective cleavage of Arg-|-Lys bond in complement factor B when in complex with complement subcomponent C3b or with cobra venom factor.. Its activity is regulated as follows. Circulates in plasma in a mature but self-inhibited form. Activated by factor B (CFB), which displaces the self-inhibition loop. Associates with CFB complexed with complement C3b. In terms of biological role, serine protease that initiates the alternative pathway of the complement system, a cascade of proteins that leads to phagocytosis and breakdown of pathogens and signaling that strengthens the adaptive immune system. In contrast to other complement pathways (classical, lectin and GZMK) that are directly activated by pathogens or antigen-antibody complexes, the alternative complement pathway is initiated by the spontaneous hydrolysis of complement C3. The alternative complement pathway acts as an amplification loop that enhances complement activation by mediating the formation of C3 and C5 convertases. Activated CFD cleaves factor B (CFB) when the latter is complexed with complement C3b, activating the C3 convertase of the alternative pathway. This Sus scrofa (Pig) protein is Complement factor D (CFD).